The following is an 823-amino-acid chain: Apoptosis-resistant E3 ubiquitin protein ligase 1 (823 aa).

The Filamin repeat unit spans residues 52-158; that stretch reads GNYLDPRSCK…VAYSPYYKIF (107 aa). Residues 315-345 are disordered; sequence PPMHMTSSQRRPSTAVDEEDEDSPSECHTPE. The interaction with SOCS2 stretch occupies residues 483 to 789; it reads SISDWSKNFE…THSTLPTAHT (307 aa). The region spanning 483–823 is the HECT domain; the sequence is SISDWSKNFE…SEGCEGFGML (341 aa). Cys790 serves as the catalytic Glycyl thioester intermediate.

As to quaternary structure, interacts with SOCS2. Interacts (via HECT domain) with HTRA2, DIABLO/SMAC and SEPTIN4; in the cytoplasm following induction of apoptosis. Autoubiquitinated in vitro in the presence of E2 enzyme UBE2D1/UBCH5A.

The catalysed reaction is S-ubiquitinyl-[E2 ubiquitin-conjugating enzyme]-L-cysteine + [acceptor protein]-L-lysine = [E2 ubiquitin-conjugating enzyme]-L-cysteine + N(6)-ubiquitinyl-[acceptor protein]-L-lysine.. It functions in the pathway protein modification; protein ubiquitination. In terms of biological role, E3 ubiquitin-protein ligase that catalyzes 'Lys-11'- or 'Lys-33'-linked polyubiquitin chains, with some preference for 'Lys-33' linkages. E3 ubiquitin-protein ligases accept ubiquitin from an E2 ubiquitin-conjugating enzyme in the form of a thioester and then directly transfers the ubiquitin to targeted substrates. Ubiquitinates SEPTIN4, DIABLO/SMAC and HTRA2 in vitro. Modulates pulmonary inflammation by targeting SOCS2 for ubiquitination and subsequent degradation by the proteasome. This Homo sapiens (Human) protein is Apoptosis-resistant E3 ubiquitin protein ligase 1.